Consider the following 80-residue polypeptide: Large ribosomal subunit protein bL31B (80 aa).

Belongs to the bacterial ribosomal protein bL31 family. Type B subfamily. In terms of assembly, part of the 50S ribosomal subunit.

This Xanthomonas axonopodis pv. citri (strain 306) protein is Large ribosomal subunit protein bL31B.